Here is a 396-residue protein sequence, read N- to C-terminus: 8-amino-7-oxononanoate synthase (396 aa).

Arginine 19 provides a ligand contact to substrate. Residue 106-107 (GY) coordinates pyridoxal 5'-phosphate. A substrate-binding site is contributed by histidine 131. Pyridoxal 5'-phosphate-binding residues include serine 176, histidine 204, and threonine 233. Lysine 236 carries the post-translational modification N6-(pyridoxal phosphate)lysine. Residue threonine 350 participates in substrate binding.

Belongs to the class-II pyridoxal-phosphate-dependent aminotransferase family. BioF subfamily. Homodimer. It depends on pyridoxal 5'-phosphate as a cofactor.

The catalysed reaction is 6-carboxyhexanoyl-[ACP] + L-alanine + H(+) = (8S)-8-amino-7-oxononanoate + holo-[ACP] + CO2. The protein operates within cofactor biosynthesis; biotin biosynthesis. Catalyzes the decarboxylative condensation of pimeloyl-[acyl-carrier protein] and L-alanine to produce 8-amino-7-oxononanoate (AON), [acyl-carrier protein], and carbon dioxide. This is 8-amino-7-oxononanoate synthase from Pseudomonas syringae pv. syringae (strain B728a).